The primary structure comprises 63 residues: uncharacterized protein (63 aa).

Its subcellular location is the mitochondrion. This is an uncharacterized protein from Marchantia polymorpha (Common liverwort).